A 155-amino-acid chain; its full sequence is Peptide methionine sulfoxide reductase MsrB (155 aa).

The 123-residue stretch at Arg-15–Thr-137 folds into the MsrB domain. Residues Cys-54, Cys-57, Cys-103, and Cys-106 each coordinate Zn(2+). The active-site Nucleophile is the Cys-126.

The protein belongs to the MsrB Met sulfoxide reductase family. Zn(2+) serves as cofactor.

It catalyses the reaction L-methionyl-[protein] + [thioredoxin]-disulfide + H2O = L-methionyl-(R)-S-oxide-[protein] + [thioredoxin]-dithiol. This is Peptide methionine sulfoxide reductase MsrB from Xylella fastidiosa (strain M23).